A 92-amino-acid polypeptide reads, in one-letter code: Co-chaperonin GroES (92 aa).

This sequence belongs to the GroES chaperonin family. As to quaternary structure, heptamer of 7 subunits arranged in a ring. Interacts with the chaperonin GroEL.

The protein localises to the cytoplasm. Its function is as follows. Together with the chaperonin GroEL, plays an essential role in assisting protein folding. The GroEL-GroES system forms a nano-cage that allows encapsulation of the non-native substrate proteins and provides a physical environment optimized to promote and accelerate protein folding. GroES binds to the apical surface of the GroEL ring, thereby capping the opening of the GroEL channel. The sequence is that of Co-chaperonin GroES from Thermotoga maritima (strain ATCC 43589 / DSM 3109 / JCM 10099 / NBRC 100826 / MSB8).